A 314-amino-acid polypeptide reads, in one-letter code: Cytosolic sulfotransferase 3 (314 aa).

3'-phosphoadenylyl sulfate is bound at residue 71 to 76; that stretch reads KSGTLW. H121 functions as the Proton acceptor in the catalytic mechanism. Residues R143, S151, Y209, and 275–277 each bind 3'-phosphoadenylyl sulfate; that span reads RKG.

Belongs to the sulfotransferase 1 family.

It is found in the cytoplasm. Its function is as follows. Sulfotransferase that utilizes 3'-phospho-5'-adenylyl sulfate (PAPS) as sulfonate donor. In Arabidopsis thaliana (Mouse-ear cress), this protein is Cytosolic sulfotransferase 3 (SOT3).